The primary structure comprises 512 residues: MDLKESPSEGSLQPSSIQIFANTSTLHGIRHIFVYGPLTIRRVLWAVAFVGSLGLLLVESSERVSYYFSYQHVTKVDEVVAQSLVFPAVTLCNLNGFRFSRLTTNDLYHAGELLALLDVNLQIPDPHLADPTVLEALRQKANFKHYKPKQFSMLEFLHRVGHDLKDMMLYCKFKGQECGHQDFTTVFTKYGKCYMFNSGEDGKPLLTTVKGGTGNGLEIMLDIQQDEYLPIWGETEETTFEAGVKVQIHSQSEPPFIQELGFGVAPGFQTFVATQEQRLTYLPPPWGECRSSEMGLDFFPVYSITACRIDCETRYIVENCNCRMVHMPGDAPFCTPEQHKECAEPALGLLAEKDSNYCLCRTPCNLTRYNKELSMVKIPSKTSAKYLEKKFNKSEKYISENILVLDIFFEALNYETIEQKKAYEVAALLGDIGGQMGLFIGASLLTILELFDYIYELIKEKLLDLLGKEEEEGSHDENMSTCDTMPNHSETISHTVNVPLQTALGTLEEIAC.

Residues 1 to 37 are Cytoplasmic-facing; the sequence is MDLKESPSEGSLQPSSIQIFANTSTLHGIRHIFVYGP. Phosphoserine occurs at positions 8 and 11. Residues 38–58 traverse the membrane as a helical segment; sequence LTIRRVLWAVAFVGSLGLLLV. The Extracellular portion of the chain corresponds to 59–427; it reads ESSERVSYYF…EQKKAYEVAA (369 aa). 6 cysteine pairs are disulfide-bonded: Cys92–Cys193, Cys289–Cys364, Cys307–Cys360, Cys311–Cys358, Cys320–Cys342, and Cys322–Cys334. 2 N-linked (GlcNAc...) asparagine glycosylation sites follow: Asn365 and Asn392. Residues 428–448 form a helical membrane-spanning segment; sequence LLGDIGGQMGLFIGASLLTIL. The short motif at 441–443 is the GAS motif; ion selectivity filter element; the sequence is GAS. Residues 449-512 lie on the Cytoplasmic side of the membrane; it reads ELFDYIYELI…ALGTLEEIAC (64 aa).

It belongs to the amiloride-sensitive sodium channel (TC 1.A.6) family. ASIC2 subfamily. In terms of assembly, can form homotrimers. Heterotrimer; forms functional heterotrimers producing channel with different properties. Forms heterotrimers with ASIC1; while ASIC1 determines current amplitude, ASIC2 influences the properties of the current. Forms heterotrimers with ASIC3; resulting in channels with distinct properties. Interacts with STOM; STOM regulates the gating of ASIC2-containing channels. Interacts with PICK1; promotes ASIC3 phosphorylation by PKC and activation of ASIC2/ASIC3 heterotrimers. In terms of tissue distribution, expressed in sciatic nerve and dorsal root ganglion (DRG) (at protein level). Both isoforms display the same expression pattern except in DRG where isoform 2 is more abundantly expressed. Widely distributed throughout the brain. Highly expressed in the main olfactory bulb, neo- and allo-cortical regions, hippocampal formation, habenula, basolateral amygdaloid nuclei, and cerebellum. In the olfactory system, expressed in the glomerular cell layer, the internal granular layer, and the mitral and internal plexiform cell layers. Within the glomerular layer, restricted to the periglomerular cells. In the neocortex, strongly expressed in the large pyramidal neurons in all cortical layers as well as in the oligo-, astro-, or micro-glia cells. In the hippocampal formation, expressed in dentate granule cells and hilar neurons, as well as in pyramidal cells of CA1-CA3 subfields. Expressed in stratum oriens and radiatum of all subfields. Within the thalamus, expressed moderately in the medial and lateral habenula. In the cerebellar cortex expressed in Purkinje cells and granule cells. Expressed at low levels in choroid plexus.

It is found in the cell membrane. It carries out the reaction Na(+)(in) = Na(+)(out). The enzyme catalyses K(+)(in) = K(+)(out). The catalysed reaction is Li(+)(in) = Li(+)(out). With respect to regulation, inhibited by the diuretic drug amiloride. Inhibited by gadolinium ions, the heterotrimer with ASIC3 being more sensitive. Zn(2+) potentiates the acid activation of ASIC2-containing homomeric and heteromeric channels. The snake venom mambalgin-1 and mambalgin-2 inhibit the homotrimers composed of ASIC1 and ASIC2 and have strong analgesic effects. In terms of biological role, forms pH-gated trimeric sodium channels that act as postsynaptic excitatory sensors in the nervous system. Upon extracellular acidification, these channels generate rapid, transient inward currents that fully desensitize. Highly selective for sodium, they are permeable to other cations. By forming heterotrimeric channels with ASIC1, could contribute to synaptic plasticity, learning, and memory. Additionally, as acid sensors at nerve terminals, plays a role in mechanosensation and phototransduction. Has no pH-gated sodium channel activity per se but can associate with other ASICs to produce functional channels with specific properties. The chain is Acid-sensing ion channel 2 from Rattus norvegicus (Rat).